The following is a 141-amino-acid chain: Large ribosomal subunit protein uL11 (141 aa).

It belongs to the universal ribosomal protein uL11 family. Part of the ribosomal stalk of the 50S ribosomal subunit. Interacts with L10 and the large rRNA to form the base of the stalk. L10 forms an elongated spine to which L12 dimers bind in a sequential fashion forming a multimeric L10(L12)X complex. Post-translationally, one or more lysine residues are methylated.

Functionally, forms part of the ribosomal stalk which helps the ribosome interact with GTP-bound translation factors. This Streptococcus suis (strain 98HAH33) protein is Large ribosomal subunit protein uL11.